The sequence spans 513 residues: Serine/threonine-protein kinase UL13 homolog (513 aa).

Positions 1–27 are disordered; the sequence is MDTESKNKKTTNGGENSNCSHSTRTPD. Residues 10–23 are compositionally biased toward polar residues; it reads TTNGGENSNCSHST. The Protein kinase domain maps to 145-487; it reads KEMPIYAGSG…FDSLNIFPYL (343 aa). ATP-binding positions include 151–159 and Lys-170; that span reads AGSGSYGVV. Asp-268 functions as the Proton acceptor in the catalytic mechanism.

Belongs to the protein kinase superfamily. Ser/Thr protein kinase family. Post-translationally, autophosphorylated.

Its subcellular location is the virion tegument. The protein resides in the host nucleus. It carries out the reaction L-seryl-[protein] + ATP = O-phospho-L-seryl-[protein] + ADP + H(+). It catalyses the reaction L-threonyl-[protein] + ATP = O-phospho-L-threonyl-[protein] + ADP + H(+). In terms of biological role, multifunctional serine/threonine kinase that plays a role in several processes including egress of virus particles from the nucleus, modulation of the actin cytoskeleton and regulation of viral and cellular gene expression. The sequence is that of Serine/threonine-protein kinase UL13 homolog (MDV025) from Gallid herpesvirus 2 (strain Chicken/Md5/ATCC VR-987) (GaHV-2).